Here is a 354-residue protein sequence, read N- to C-terminus: RH-like protein (354 aa).

8 helical membrane passes run Gly-11–Phe-31, Val-45–Leu-65, Val-77–Phe-97, Ile-125–Val-145, Val-167–Leu-187, Ala-209–Thr-229, Val-238–Leu-258, and Leu-287–Gly-307.

It belongs to the ammonium transporter (TC 2.A.49) family. Rh subfamily.

The protein resides in the membrane. Its function is as follows. May be part of an oligomeric complex which is likely to have a transport or channel function in the erythrocyte membrane. This chain is RH-like protein, found in Hylobates pileatus (Pileated gibbon).